The following is a 489-amino-acid chain: Cysteine--tRNA ligase (489 aa).

Position 27 (C27) interacts with Zn(2+). Positions 29–39 match the 'HIGH' region motif; it reads VTVYDLCHLGH. 3 residues coordinate Zn(2+): C211, H236, and E240. The 'KMSKS' region motif lies at 268–272; sequence KMSKS. Position 271 (K271) interacts with ATP.

Belongs to the class-I aminoacyl-tRNA synthetase family. Monomer. It depends on Zn(2+) as a cofactor.

The protein localises to the cytoplasm. It carries out the reaction tRNA(Cys) + L-cysteine + ATP = L-cysteinyl-tRNA(Cys) + AMP + diphosphate. This is Cysteine--tRNA ligase from Prochlorococcus marinus (strain MIT 9215).